Consider the following 128-residue polypeptide: NHP2-like protein 1 (128 aa).

Methionine 1 carries the post-translational modification N-acetylmethionine. Threonine 2 carries the N-acetylthreonine; in NHP2-like protein 1, N-terminally processed modification. An N6-acetyllysine modification is found at lysine 21. The segment at 36 to 48 (RKGANEATKTLNR) is interaction with U4 snRNA and U4atac snRNA. Residues 96 to 128 (SRPVIACSVTIKEGSQLKQQIQSIQQSIERLLV) are important for U4 snRNA-binding. The residue at position 122 (serine 122) is a Phosphoserine.

The protein belongs to the eukaryotic ribosomal protein eL8 family. Identified in the spliceosome B complex. Component of the U4/U6-U5 tri-snRNP complex composed of the U4, U6 and U5 snRNAs and at least PRPF3, PRPF4, PRPF6, PRPF8, PRPF31, SNRNP200, TXNL4A, WDR57, SNRNP40, DDX23, CD2BP2, PPIH, NHP2L1, EFTUD2, SART1 and USP39. Interacts with RAD17 and PRPF31. The complex formed by SNU13 and PRPF31 binds U4 snRNA. The complex formed by SNU13 and PRPF31 also binds U4atac snRNA, a characteristic component of specific, less abundant spliceosomal complexes. Part of the small subunit (SSU) processome, composed of more than 70 proteins and the RNA chaperone small nucleolar RNA (snoRNA) U3. Core component of box C/D small nucleolar ribonucleoprotein (snoRNP) particles; the core proteins SNU13, NOP56, NOP58 and FBL or FBLL1 assemble stepwise onto the snoRNA.

Its subcellular location is the nucleus. The protein resides in the nucleolus. Functionally, part of the small subunit (SSU) processome, first precursor of the small eukaryotic ribosomal subunit. During the assembly of the SSU processome in the nucleolus, many ribosome biogenesis factors, an RNA chaperone and ribosomal proteins associate with the nascent pre-rRNA and work in concert to generate RNA folding, modifications, rearrangements and cleavage as well as targeted degradation of pre-ribosomal RNA by the RNA exosome. Involved in pre-mRNA splicing as component of the spliceosome. Binds to the 5'-stem-loop of U4 snRNA and thereby contributes to spliceosome assembly. The protein undergoes a conformational change upon RNA-binding. Core component of box C/D small nucleolar ribonucleoprotein (snoRNP) complexes that function in methylation of multiple sites on ribosomal RNAs (rRNAs) and messenger RNAs (mRNAs). This chain is NHP2-like protein 1, found in Bos taurus (Bovine).